Here is a 103-residue protein sequence, read N- to C-terminus: Histone H4 (103 aa).

The segment covering 1-14 has biased composition (gly residues); the sequence is MSGRGKGGKGLGKG. The tract at residues 1-20 is disordered; it reads MSGRGKGGKGLGKGGAKRHR. A DNA-binding region spans residues 17 to 21; that stretch reads KRHRK.

This sequence belongs to the histone H4 family. As to quaternary structure, the nucleosome is a histone octamer containing two molecules each of H2A, H2B, H3 and H4 assembled in one H3-H4 heterotetramer and two H2A-H2B heterodimers. The octamer wraps approximately 147 bp of DNA.

It localises to the nucleus. It is found in the chromosome. Core component of nucleosome. Nucleosomes wrap and compact DNA into chromatin, limiting DNA accessibility to the cellular machineries which require DNA as a template. Histones thereby play a central role in transcription regulation, DNA repair, DNA replication and chromosomal stability. DNA accessibility is regulated via a complex set of post-translational modifications of histones, also called histone code, and nucleosome remodeling. This chain is Histone H4, found in Eimeria tenella (Coccidian parasite).